The following is a 31-amino-acid chain: Cyclotide cter-C (31 aa).

The segment at residues 1–31 (GVPCAESCVWIPCTVTALLGCSCKDKVCYLD) is a cross-link (cyclopeptide (Gly-Asp)). Intrachain disulfides connect Cys4–Cys21, Cys8–Cys23, and Cys13–Cys28.

In terms of processing, contains 3 disulfide bonds. Post-translationally, this is a cyclic peptide.

In terms of biological role, probably participates in a plant defense mechanism. The chain is Cyclotide cter-C from Clitoria ternatea (Butterfly pea).